The sequence spans 63 residues: Small ribosomal subunit protein uS14 (63 aa).

The Zn(2+) site is built by Cys-26, Cys-29, Cys-42, and Cys-45.

This sequence belongs to the universal ribosomal protein uS14 family. Zinc-binding uS14 subfamily. As to quaternary structure, part of the 30S ribosomal subunit. Contacts proteins S3 and S10. It depends on Zn(2+) as a cofactor.

Its function is as follows. Binds 16S rRNA, required for the assembly of 30S particles and may also be responsible for determining the conformation of the 16S rRNA at the A site. The chain is Small ribosomal subunit protein uS14 from Gloeobacter violaceus (strain ATCC 29082 / PCC 7421).